Consider the following 459-residue polypeptide: 4,4'-diaponeurosporen-aldehyde dehydrogenase (459 aa).

NAD(+) contacts are provided by residues 114–115 (FN) and 188–189 (GS). The active-site Proton acceptor is the E210. NAD(+) is bound at residue M211. The active-site Nucleophile is C244. Residue E336 participates in NAD(+) binding.

Belongs to the aldehyde dehydrogenase family.

It catalyses the reaction 4,4'-diaponeurosporenal + NAD(+) + H2O = 4,4'-diaponeurosporenoate + NADH + 2 H(+). Its pathway is carotenoid biosynthesis; staphyloxanthin biosynthesis; staphyloxanthin from farnesyl diphosphate. Involved in the biosynthesis of the yellow-orange carotenoid staphyloxanthin, which plays a role in the virulence via its protective function against oxidative stress. Catalyzes the oxidation of 4,4'-diaponeurosporen-4-al to yield 4,4'-diaponeurosporenoic acid. This chain is 4,4'-diaponeurosporen-aldehyde dehydrogenase, found in Staphylococcus aureus (strain NCTC 8325 / PS 47).